The following is a 463-amino-acid chain: Elongation factor 1-alpha 2 (463 aa).

At glycine 2 the chain carries N,N,N-trimethylglycine. Residues 5–242 (KTHINIVVIG…DTILPPTRPT (238 aa)) enclose the tr-type G domain. A G1 region spans residues 14–21 (GHVDSGKS). GTP-binding residues include aspartate 17, serine 18, glycine 19, lysine 20, serine 21, and threonine 22. A Mg(2+)-binding site is contributed by aspartate 17. The residue at position 36 (lysine 36) is an N6,N6,N6-trimethyllysine; alternate. Lysine 36 is modified (N6,N6-dimethyllysine; alternate). Lysine 36 carries the N6-methyllysine; alternate modification. Lysine 55 bears the N6,N6,N6-trimethyllysine mark. Lysine 55 carries the N6,N6-dimethyllysine modification. The interval 70-74 (GITID) is G2. N6,N6,N6-trimethyllysine is present on lysine 79. A G3 region spans residues 91 to 94 (DAPG). The GTP site is built by asparagine 153, lysine 154, and aspartate 156. The interval 153-156 (NKMD) is G4. Phosphoserine is present on serine 163. Lysine 165 carries the N6,N6-dimethyllysine; alternate modification. Lysine 165 is modified (N6-methyllysine; alternate). Residue lysine 165 is modified to N6,N6,N6-trimethyllysine; alternate; by EEF1AKMT3. Lysine 179 bears the N6-acetyllysine mark. Residues serine 194, glycine 195, and tryptophan 196 each coordinate GTP. The G5 stretch occupies residues 194–196 (SGW). Serine 224 is modified (phosphoserine). At threonine 239 the chain carries Phosphothreonine. 2 positions are modified to 5-glutamyl glycerylphosphorylethanolamine: glutamate 301 and glutamate 374. Lysine 439 is modified (N6-acetyllysine). The tract at residues 444 to 463 (KSGGAGKVTKSAQKAQKAGK) is disordered.

The protein belongs to the TRAFAC class translation factor GTPase superfamily. Classic translation factor GTPase family. EF-Tu/EF-1A subfamily. As to quaternary structure, homodimer; arranged in a 'head to tail' dimer configuration. In terms of processing, trimethylated at Lys-165 by EEF1AKMT3. Mono-, di-, and trimethylated at Lys-36 by EEF1AKMT4; trimethylated form is predominant. Methylation by EEF1AKMT4 contributes to the fine-tuning of translation rates for a subset of tRNAs. Trimethylated at the N-terminus and dimethylated at Lys-55 by METTL13.

It localises to the endoplasmic reticulum membrane. It carries out the reaction GTP + H2O = GDP + phosphate + H(+). Translation elongation factor that catalyzes the GTP-dependent binding of aminoacyl-tRNA (aa-tRNA) to the A-site of ribosomes during the elongation phase of protein synthesis. Base pairing between the mRNA codon and the aa-tRNA anticodon promotes GTP hydrolysis, releasing the aa-tRNA from EEF1A1 and allowing its accommodation into the ribosome. The growing protein chain is subsequently transferred from the P-site peptidyl tRNA to the A-site aa-tRNA, extending it by one amino acid through ribosome-catalyzed peptide bond formation. The protein is Elongation factor 1-alpha 2 (EEF1A2) of Bos taurus (Bovine).